Reading from the N-terminus, the 81-residue chain is Photosystem I iron-sulfur center (81 aa).

2 consecutive 4Fe-4S ferredoxin-type domains span residues 2-31 (VHVV…MVPW) and 39-68 (IASS…IRVY). Residues C11, C14, C17, C21, C48, C51, C54, and C58 each contribute to the [4Fe-4S] cluster site.

In terms of assembly, the eukaryotic PSI reaction center is composed of at least 11 subunits. The cofactor is [4Fe-4S] cluster.

It is found in the plastid. The protein localises to the chloroplast thylakoid membrane. The enzyme catalyses reduced [plastocyanin] + hnu + oxidized [2Fe-2S]-[ferredoxin] = oxidized [plastocyanin] + reduced [2Fe-2S]-[ferredoxin]. Functionally, apoprotein for the two 4Fe-4S centers FA and FB of photosystem I (PSI); essential for photochemical activity. FB is the terminal electron acceptor of PSI, donating electrons to ferredoxin. The C-terminus interacts with PsaA/B/D and helps assemble the protein into the PSI complex. Required for binding of PsaD and PsaE to PSI. PSI is a plastocyanin/cytochrome c6-ferredoxin oxidoreductase, converting photonic excitation into a charge separation, which transfers an electron from the donor P700 chlorophyll pair to the spectroscopically characterized acceptors A0, A1, FX, FA and FB in turn. This is Photosystem I iron-sulfur center from Cyanidium caldarium (Red alga).